Consider the following 103-residue polypeptide: Methanol dehydrogenase [cytochrome c] subunit 2 (103 aa).

A signal peptide spans 1-20; that stretch reads MKRILTLTVAALALGTPALA. The cysteines at positions 26 and 32 are disulfide-linked.

Belongs to the methanol dehydrogenase subunit 2 family. As to quaternary structure, heterotetramer composed of 2 alpha and 2 beta subunits.

It localises to the periplasm. It catalyses the reaction 2 Fe(III)-[cytochrome cL] + a primary alcohol = 2 Fe(II)-[cytochrome cL] + an aldehyde + 2 H(+). In terms of biological role, catalyzes the oxidation of primary alcohols including methanol. The sequence is that of Methanol dehydrogenase [cytochrome c] subunit 2 (moxI) from Paracoccus denitrificans.